A 396-amino-acid chain; its full sequence is Elongation factor Tu (396 aa).

One can recognise a tr-type G domain in the interval 10–206; it reads KPHVNVGTIG…ALDTYIPTPE (197 aa). The tract at residues 19-26 is G1; it reads GHVDHGKT. 19 to 26 contributes to the GTP binding site; sequence GHVDHGKT. Thr-26 contributes to the Mg(2+) binding site. The segment at 60–64 is G2; that stretch reads GITIN. The segment at 81 to 84 is G3; the sequence is DCPG. GTP-binding positions include 81–85 and 136–139; these read DCPGH and NKAD. The G4 stretch occupies residues 136–139; it reads NKAD. Residues 174 to 176 form a G5 region; the sequence is SAK.

It belongs to the TRAFAC class translation factor GTPase superfamily. Classic translation factor GTPase family. EF-Tu/EF-1A subfamily. As to quaternary structure, monomer.

The protein localises to the cytoplasm. The catalysed reaction is GTP + H2O = GDP + phosphate + H(+). Its function is as follows. GTP hydrolase that promotes the GTP-dependent binding of aminoacyl-tRNA to the A-site of ribosomes during protein biosynthesis. This chain is Elongation factor Tu, found in Janthinobacterium sp. (strain Marseille) (Minibacterium massiliensis).